A 612-amino-acid polypeptide reads, in one-letter code: Probable cytosolic Fe-S cluster assembly factor SJAG_02895 (612 aa).

13–20 (GKGGVGKS) serves as a coordination point for ATP. Cysteine 200 and cysteine 203 together coordinate [4Fe-4S] cluster. WD repeat units lie at residues 287-326 (GHRGRIWSVAVHPTLPLVATASEDKSVRVFQAQTGELIHV), 330-370 (YHTR…WECV), 375-414 (GHENEVKCVAWSHDGVYLATCSRDKSVWIWEAMEDDEFDC), 420-459 (EHTQDVKVVAWHPKDDLLVSGSYDNTIRFWRDDGDDWVQT), 464-503 (SHTSTVWALNFSPDGRLLASGDGEGEVFIWEKLVSNEDAA), 528-566 (TFTEPVYTLGWKDDHTLCASGAEGTIGLFAYEDDVSTWH), and 574-612 (AHDVYEINTIAWTNDSRLLSGGDDGLCNVWKLSEADQTA).

It in the N-terminal section; belongs to the Mrp/NBP35 ATP-binding proteins family. NUBP2/CFD1 subfamily. This sequence in the C-terminal section; belongs to the WD repeat CIA1 family. In terms of assembly, heterotetramer of 2 nbp35 and 2 SJAG_02895 chains. [4Fe-4S] cluster serves as cofactor.

It localises to the cytoplasm. Its subcellular location is the nucleus. In terms of biological role, fusion protein of two essential components of the cytosolic iron-sulfur (Fe/S) protein assembly (CIA) machinery. Required for maturation of extramitochondrial Fe-S proteins. May form a heterotetramer with nubp35, functioning as a Fe-S scaffold complex, mediating the de novo assembly of an Fe-S cluster and its transfer to target apoproteins. The sequence is that of Probable cytosolic Fe-S cluster assembly factor SJAG_02895 from Schizosaccharomyces japonicus (strain yFS275 / FY16936) (Fission yeast).